A 238-amino-acid polypeptide reads, in one-letter code: Ribonuclease PH (238 aa).

Phosphate is bound by residues Arg86 and 124-126; that span reads GTR.

This sequence belongs to the RNase PH family. Homohexameric ring arranged as a trimer of dimers.

The enzyme catalyses tRNA(n+1) + phosphate = tRNA(n) + a ribonucleoside 5'-diphosphate. Functionally, phosphorolytic 3'-5' exoribonuclease that plays an important role in tRNA 3'-end maturation. Removes nucleotide residues following the 3'-CCA terminus of tRNAs; can also add nucleotides to the ends of RNA molecules by using nucleoside diphosphates as substrates, but this may not be physiologically important. Probably plays a role in initiation of 16S rRNA degradation (leading to ribosome degradation) during starvation. The protein is Ribonuclease PH of Shigella boydii serotype 18 (strain CDC 3083-94 / BS512).